The following is a 147-amino-acid chain: Hemoglobin subunit beta (147 aa).

Val2 carries the post-translational modification N-acetylvaline. The Globin domain maps to 3–147; that stretch reads HLSAEEKGHI…VATALAHKYH (145 aa). The residue at position 60 (Lys60) is an N6-acetyllysine. Position 64 (His64) interacts with heme b. Lys83 carries the N6-acetyllysine modification. His93 serves as a coordination point for heme b. Cys94 is modified (S-nitrosocysteine). N6-acetyllysine is present on Lys145.

It belongs to the globin family. As to quaternary structure, heterotetramer of two alpha chains and two beta chains. Red blood cells.

Involved in oxygen transport from the lung to the various peripheral tissues. The polypeptide is Hemoglobin subunit beta (HBB) (Sminthopsis crassicaudata (Fat-tailed dunnart)).